The following is a 177-amino-acid chain: uncharacterized protein (177 aa).

This is an uncharacterized protein from Azotobacter chroococcum mcd 1.